The following is a 64-amino-acid chain: Putative antitoxin VapB1 (64 aa).

Its function is as follows. Possibly the antitoxin component of a type II toxin-antitoxin (TA) system. Its cognate toxin is VapC1 (Potential). This Methanocaldococcus jannaschii (strain ATCC 43067 / DSM 2661 / JAL-1 / JCM 10045 / NBRC 100440) (Methanococcus jannaschii) protein is Putative antitoxin VapB1 (vapB1).